The sequence spans 416 residues: Glutamyl-tRNA reductase (416 aa).

Residues 49–52, Ser105, 110–112, and Gln116 contribute to the substrate site; these read TCNR and EPQ. Cys50 acts as the Nucleophile in catalysis. An NADP(+)-binding site is contributed by 185 to 190; that stretch reads GAGEMI.

Belongs to the glutamyl-tRNA reductase family. In terms of assembly, homodimer.

It catalyses the reaction (S)-4-amino-5-oxopentanoate + tRNA(Glu) + NADP(+) = L-glutamyl-tRNA(Glu) + NADPH + H(+). The protein operates within porphyrin-containing compound metabolism; protoporphyrin-IX biosynthesis; 5-aminolevulinate from L-glutamyl-tRNA(Glu): step 1/2. Its function is as follows. Catalyzes the NADPH-dependent reduction of glutamyl-tRNA(Glu) to glutamate 1-semialdehyde (GSA). In Nitrosomonas europaea (strain ATCC 19718 / CIP 103999 / KCTC 2705 / NBRC 14298), this protein is Glutamyl-tRNA reductase.